The following is a 282-amino-acid chain: MNDNLKPADIVREEKAQLDFSRAMSYGDYLHLDAILGAQQPLSPAHDEMLFIIQHQTSELWMKLMLHELRAAIANVAQDELGSAFKKLARVSKIMEQLVHAWDVLATMTPPEYSAIRPYLASSSGFQSAQYRCIEFALGNKNAAMLKPHAHRPDLLALVTAAFEAPSLYDEALRLLARRGLSVPASHTERDWTQGYVENDAVESAWLTVYRDPKQYWDLYQLGEELTDLEDAFRLWRFRHVTTVERVIGFKRGTGGTGGVSYLRKMLDVVLFPEIWKLRTDL.

Substrate contacts are provided by residues 51–55, tyrosine 113, and arginine 117; that span reads FIIQH. Position 240 (histidine 240) interacts with heme. Threonine 254 serves as a coordination point for substrate.

It belongs to the tryptophan 2,3-dioxygenase family. In terms of assembly, homotetramer. Heme serves as cofactor.

The enzyme catalyses L-tryptophan + O2 = N-formyl-L-kynurenine. Its pathway is amino-acid degradation; L-tryptophan degradation via kynurenine pathway; L-kynurenine from L-tryptophan: step 1/2. Its function is as follows. Heme-dependent dioxygenase that catalyzes the oxidative cleavage of the L-tryptophan (L-Trp) pyrrole ring and converts L-tryptophan to N-formyl-L-kynurenine. Catalyzes the oxidative cleavage of the indole moiety. The chain is Tryptophan 2,3-dioxygenase from Polaromonas naphthalenivorans (strain CJ2).